Consider the following 377-residue polypeptide: Probable riboflavin import permease protein RfuC (377 aa).

The next 10 membrane-spanning stretches (helical) occupy residues 4–24, 49–69, 72–92, 98–118, 135–155, 182–202, 223–245, 249–268, 274–294, and 303–323; these read VINS…VIVL, ALFH…CALK, MINL…ALLL, VGFL…AGIL, ITSF…IITV, FGVP…GCFF, FVGF…LFGL, FSVV…GMGY, ALIA…FAWM, and LGAH…FLLI.

Belongs to the binding-protein-dependent transport system permease family. In terms of assembly, the complex is probably composed of two ATP-binding proteins (RfuB), two transmembrane proteins (RfuC and RfuD) and a solute-binding protein (RfuA).

It localises to the cell inner membrane. Functionally, probably part of the ABC transporter complex RfuABCD involved in riboflavin import. Probably responsible for the translocation of the substrate across the membrane. The chain is Probable riboflavin import permease protein RfuC from Treponema pallidum (strain Nichols).